A 325-amino-acid chain; its full sequence is tRNA N6-adenosine threonylcarbamoyltransferase (325 aa).

Fe cation is bound by residues histidine 107 and histidine 111. Substrate-binding positions include 129-133 (LVSGG), aspartate 162, glycine 175, and asparagine 265. Residue aspartate 293 participates in Fe cation binding.

This sequence belongs to the KAE1 / TsaD family. The cofactor is Fe(2+).

It localises to the cytoplasm. It carries out the reaction L-threonylcarbamoyladenylate + adenosine(37) in tRNA = N(6)-L-threonylcarbamoyladenosine(37) in tRNA + AMP + H(+). Functionally, required for the formation of a threonylcarbamoyl group on adenosine at position 37 (t(6)A37) in tRNAs that read codons beginning with adenine. Is involved in the transfer of the threonylcarbamoyl moiety of threonylcarbamoyl-AMP (TC-AMP) to the N6 group of A37, together with TsaE and TsaB. TsaD likely plays a direct catalytic role in this reaction. The chain is tRNA N6-adenosine threonylcarbamoyltransferase from Sulfurimonas denitrificans (strain ATCC 33889 / DSM 1251) (Thiomicrospira denitrificans (strain ATCC 33889 / DSM 1251)).